The sequence spans 432 residues: ATP-dependent RNA helicase RhlB (432 aa).

The short motif at 9-37 is the Q motif element; sequence KKFSDFALHPKVIEALEKKGFSNCTQIQA. Residues 40–219 enclose the Helicase ATP-binding domain; the sequence is LPITVKGHDI…FEQMNNPEYV (180 aa). Residue 53–60 participates in ATP binding; it reads AQTGTGKT. Positions 165-168 match the DEAD box motif; that stretch reads DEAD. The 146-residue stretch at 245–390 folds into the Helicase C-terminal domain; sequence RLLQTLIEEE…VSKYNSDALL (146 aa). Residues 393–432 are disordered; the sequence is LPEPKRRHRPRQGQPRRNNSAPRRGNNTQRNNRNKRPSHS. Positions 404 to 423 are enriched in low complexity; the sequence is QGQPRRNNSAPRRGNNTQRN.

This sequence belongs to the DEAD box helicase family. RhlB subfamily. In terms of assembly, component of the RNA degradosome, which is a multiprotein complex involved in RNA processing and mRNA degradation.

The protein localises to the cytoplasm. It carries out the reaction ATP + H2O = ADP + phosphate + H(+). DEAD-box RNA helicase involved in RNA degradation. Has RNA-dependent ATPase activity and unwinds double-stranded RNA. This Proteus mirabilis (strain HI4320) protein is ATP-dependent RNA helicase RhlB.